Reading from the N-terminus, the 222-residue chain is MTTALLLCLCLLLITYLMGSIPTGYLAGKLLLGIDIREHGSKSTGATNVFRTLGKPAAIAVLAIDISKGVMAVALVRAIYSGDWLPALPAAWQNWLTLGVAIAVVLGHSKSIFLKFSGGKSVATSLGVLFMLNIWLALGTLATFLTVIFFTRIVSLSSIVAAIAVNGIALALQLPPPYLAFTFLAGMYVIVRHRTNIERILQGTEPKLGEKVSSVPDRKGVA.

A run of 6 helical transmembrane segments spans residues 4-24, 56-76, 87-107, 130-150, 153-173, and 174-191; these read ALLLCLCLLLITYLMGSIPTG, PAAIAVLAIDISKGVMAVALV, ALPAAWQNWLTLGVAIAVVLG, FMLNIWLALGTLATFLTVIFF, IVSLSSIVAAIAVNGIALALQ, and LPPPYLAFTFLAGMYVIV.

The protein belongs to the PlsY family. In terms of assembly, probably interacts with PlsX.

The protein localises to the cell inner membrane. The catalysed reaction is an acyl phosphate + sn-glycerol 3-phosphate = a 1-acyl-sn-glycero-3-phosphate + phosphate. The protein operates within lipid metabolism; phospholipid metabolism. Catalyzes the transfer of an acyl group from acyl-phosphate (acyl-PO(4)) to glycerol-3-phosphate (G3P) to form lysophosphatidic acid (LPA). This enzyme utilizes acyl-phosphate as fatty acyl donor, but not acyl-CoA or acyl-ACP. In Synechocystis sp. (strain ATCC 27184 / PCC 6803 / Kazusa), this protein is Glycerol-3-phosphate acyltransferase.